The primary structure comprises 260 residues: CD40 ligand (260 aa).

Residues 1–22 (MIETYSQPSPRSVATGLPASMK) are Cytoplasmic-facing. A helical; Signal-anchor for type II membrane protein membrane pass occupies residues 23–46 (IFMYLLTVFLITQMIGSVLFAVYL). The Extracellular portion of the chain corresponds to 47 to 260 (HRRLDKVEEE…GFSSFGLLKL (214 aa)). Residues 121–260 (IAAHVVSEAN…GFSSFGLLKL (140 aa)) form the THD domain. Residues Cys-177 and Cys-217 are joined by a disulfide bond. N-linked (GlcNAc...) asparagine glycosylation occurs at Asn-239.

This sequence belongs to the tumor necrosis factor family. As to quaternary structure, homotrimer. Interacts with CD28. CD40 ligand, soluble form: Exists as either a monomer or a homotrimer. Forms a ternary complex between CD40 and integrins for CD40-CD40LG signaling. The soluble form derives from the membrane form by proteolytic processing. In terms of tissue distribution, specifically expressed on activated CD4+ T-lymphocytes.

Its subcellular location is the cell membrane. The protein localises to the cell surface. It is found in the secreted. Functionally, cytokine that acts as a ligand to CD40/TNFRSF5. Costimulates T-cell proliferation and cytokine production. Its cross-linking on T-cells generates a costimulatory signal which enhances the production of IL4 and IL10 in conjunction with the TCR/CD3 ligation and CD28 costimulation. Induces the activation of NF-kappa-B. Induces the activation of kinases MAPK8 and PAK2 in T-cells. Mediates B-cell proliferation in the absence of co-stimulus as well as IgE production in the presence of IL4. Involved in immunoglobulin class switching. Acts as a ligand for integrins, specifically ITGA5:ITGB1 and ITGAV:ITGB3; both integrins and the CD40 receptor are required for activation of CD40-CD40LG signaling, which have cell-type dependent effects, such as B-cell activation, NF-kappa-B signaling and anti-apoptotic signaling. In Mus musculus (Mouse), this protein is CD40 ligand (Cd40lg).